A 301-amino-acid chain; its full sequence is Recombination-associated protein RdgC (301 aa).

The protein belongs to the RdgC family.

Its subcellular location is the cytoplasm. The protein resides in the nucleoid. Its function is as follows. May be involved in recombination. In Xanthomonas oryzae pv. oryzae (strain KACC10331 / KXO85), this protein is Recombination-associated protein RdgC.